Consider the following 266-residue polypeptide: Nitrate import ATP-binding protein NrtD (266 aa).

The region spanning Leu-3 to Tyr-234 is the ABC transporter domain. Gly-39–Ser-46 contacts ATP.

This sequence belongs to the ABC transporter superfamily. Nitrate/nitrite/cyanate uptake transporter (NitT) (TC 3.A.1.16) family. As to quaternary structure, the complex is composed of two ATP-binding proteins (NrtC and NrtD), two transmembrane proteins (NrtB) and a solute-binding protein (NrtA).

The protein localises to the cell inner membrane. The catalysed reaction is nitrate(out) + ATP + H2O = nitrate(in) + ADP + phosphate + H(+). In terms of biological role, part of the ABC transporter complex NrtABCD involved in nitrate uptake. The complex is probably also involved in nitrite transport. Probably responsible for energy coupling to the transport system. This chain is Nitrate import ATP-binding protein NrtD (nrtD), found in Synechocystis sp. (strain ATCC 27184 / PCC 6803 / Kazusa).